Consider the following 253-residue polypeptide: Imidazole glycerol phosphate synthase subunit HisF (253 aa).

Active-site residues include Asp-12 and Asp-131.

This sequence belongs to the HisA/HisF family. Heterodimer of HisH and HisF.

Its subcellular location is the cytoplasm. The enzyme catalyses 5-[(5-phospho-1-deoxy-D-ribulos-1-ylimino)methylamino]-1-(5-phospho-beta-D-ribosyl)imidazole-4-carboxamide + L-glutamine = D-erythro-1-(imidazol-4-yl)glycerol 3-phosphate + 5-amino-1-(5-phospho-beta-D-ribosyl)imidazole-4-carboxamide + L-glutamate + H(+). Its pathway is amino-acid biosynthesis; L-histidine biosynthesis; L-histidine from 5-phospho-alpha-D-ribose 1-diphosphate: step 5/9. Its function is as follows. IGPS catalyzes the conversion of PRFAR and glutamine to IGP, AICAR and glutamate. The HisF subunit catalyzes the cyclization activity that produces IGP and AICAR from PRFAR using the ammonia provided by the HisH subunit. In Corynebacterium urealyticum (strain ATCC 43042 / DSM 7109), this protein is Imidazole glycerol phosphate synthase subunit HisF.